The sequence spans 417 residues: Alpha-ionylideneethane synthase aba3 (417 aa).

Belongs to the alpha-ionylideneethane synthase family.

It participates in hormone biosynthesis. Its function is as follows. Alpha-ionylideneethane synthase; part of the gene cluster that mediates the biosynthesis of abscisic acid (ABA), a phytohormone that acts antagonistically toward salicylic acid (SA), jasmonic acid (JA) and ethylene (ETH) signaling, to impede plant defense responses. The first step of the pathway catalyzes the reaction from farnesyl diphosphate to alpha-ionylideneethane performed by the alpha-ionylideneethane synthase aba3 via a three-step reaction mechanism involving 2 neutral intermediates, beta-farnesene and allofarnesene. The cytochrome P450 monooxygenase aba1 might then be involved in the conversion of alpha-ionylideneethane to alpha-ionylideneacetic acid. Alpha-ionylideneacetic acid is further converted to abscisic acid in 2 steps involving the cytochrome P450 monooxygenase aba2 and the short-chain dehydrogenase/reductase aba4, via the intermediates 1'-deoxy-ABA or 1',4'-trans-diol-ABA, depending on the order of action of these 2 enzymes. Aba2 is responsible for the hydroxylation of carbon atom C-1' and aba4 might be involved in the oxidation of the C-4' carbon atom. The polypeptide is Alpha-ionylideneethane synthase aba3 (Botryotinia fuckeliana (Noble rot fungus)).